Reading from the N-terminus, the 293-residue chain is Acetylglutamate kinase (293 aa).

Substrate contacts are provided by residues 65–66 (GG), arginine 87, and asparagine 180.

The protein belongs to the acetylglutamate kinase family. ArgB subfamily.

The protein resides in the cytoplasm. It carries out the reaction N-acetyl-L-glutamate + ATP = N-acetyl-L-glutamyl 5-phosphate + ADP. It functions in the pathway amino-acid biosynthesis; L-arginine biosynthesis; N(2)-acetyl-L-ornithine from L-glutamate: step 2/4. Catalyzes the ATP-dependent phosphorylation of N-acetyl-L-glutamate. In Cereibacter sphaeroides (strain ATCC 17029 / ATH 2.4.9) (Rhodobacter sphaeroides), this protein is Acetylglutamate kinase.